Reading from the N-terminus, the 300-residue chain is Bifunctional protein FolD (300 aa).

Residues 169–171, Ser196, and Ile237 contribute to the NADP(+) site; that span reads GRG.

The protein belongs to the tetrahydrofolate dehydrogenase/cyclohydrolase family. In terms of assembly, homodimer.

The catalysed reaction is (6R)-5,10-methylene-5,6,7,8-tetrahydrofolate + NADP(+) = (6R)-5,10-methenyltetrahydrofolate + NADPH. The enzyme catalyses (6R)-5,10-methenyltetrahydrofolate + H2O = (6R)-10-formyltetrahydrofolate + H(+). Its pathway is one-carbon metabolism; tetrahydrofolate interconversion. Its function is as follows. Catalyzes the oxidation of 5,10-methylenetetrahydrofolate to 5,10-methenyltetrahydrofolate and then the hydrolysis of 5,10-methenyltetrahydrofolate to 10-formyltetrahydrofolate. In Clavibacter sepedonicus (Clavibacter michiganensis subsp. sepedonicus), this protein is Bifunctional protein FolD.